Reading from the N-terminus, the 338-residue chain is MNLQRFPRHPLTFGPTPIQPLKRLSAHLGGQVELYAKREDCNSGLAFGGNKTRKLEYLIPEALAQGCDTLVSIGGIQSNQTRQVAAVAAHLGMKCVLVQENWVNYSDAVYDRVGNIEMSRILGADVRLDAAGFDIGIRPSWEQAMADVRAAGGKPFPIPAGCSEHRLGGLGFVGFAEEVRAQEAELGFKFDYIVVCSVTGSTQAGMVVGFAADGRAERVIGIDASAKPEQTHAQILRIAQNTAELVGLGREITAQDVVLDTRYGGPEYGLPSEGTLEAIRLCARQEGMLTDPVYEGKSMHGMIDKVKRGEFPAGSRVLYAHLGGVPALNAYSFLFRNG.

An N6-(pyridoxal phosphate)lysine modification is found at lysine 51. Serine 78 functions as the Nucleophile in the catalytic mechanism.

The protein belongs to the ACC deaminase/D-cysteine desulfhydrase family. As to quaternary structure, homotrimer. Pyridoxal 5'-phosphate is required as a cofactor.

The catalysed reaction is 1-aminocyclopropane-1-carboxylate + H2O = 2-oxobutanoate + NH4(+). Functionally, catalyzes a cyclopropane ring-opening reaction, the irreversible conversion of 1-aminocyclopropane-1-carboxylate (ACC) to ammonia and alpha-ketobutyrate. Allows growth on ACC as a nitrogen source. In Methylibium petroleiphilum (strain ATCC BAA-1232 / LMG 22953 / PM1), this protein is 1-aminocyclopropane-1-carboxylate deaminase.